The following is a 55-amino-acid chain: uncharacterized protein (55 aa).

This is an uncharacterized protein from Saccharomyces cerevisiae (strain ATCC 204508 / S288c) (Baker's yeast).